We begin with the raw amino-acid sequence, 434 residues long: Phosphomethylpyrimidine synthase (434 aa).

Residues N74, M103, Y132, H171, 193-195 (SRG), 234-237 (DGIR), and E273 each bind substrate. H277 serves as a coordination point for Zn(2+). Y300 provides a ligand contact to substrate. A Zn(2+)-binding site is contributed by H341. 3 residues coordinate [4Fe-4S] cluster: C417, C420, and C424.

Belongs to the ThiC family. In terms of assembly, homodimer. It depends on [4Fe-4S] cluster as a cofactor.

The catalysed reaction is 5-amino-1-(5-phospho-beta-D-ribosyl)imidazole + S-adenosyl-L-methionine = 4-amino-2-methyl-5-(phosphooxymethyl)pyrimidine + CO + 5'-deoxyadenosine + formate + L-methionine + 3 H(+). The protein operates within cofactor biosynthesis; thiamine diphosphate biosynthesis. In terms of biological role, catalyzes the synthesis of the hydroxymethylpyrimidine phosphate (HMP-P) moiety of thiamine from aminoimidazole ribotide (AIR) in a radical S-adenosyl-L-methionine (SAM)-dependent reaction. This is Phosphomethylpyrimidine synthase from Desulfotalea psychrophila (strain LSv54 / DSM 12343).